The following is an 81-amino-acid chain: ATP synthase subunit c, chloroplastic (81 aa).

A run of 2 helical transmembrane segments spans residues 7-27 (AASV…PGIG) and 57-77 (LAFM…LLFA).

Belongs to the ATPase C chain family. As to quaternary structure, F-type ATPases have 2 components, F(1) - the catalytic core - and F(0) - the membrane proton channel. F(1) has five subunits: alpha(3), beta(3), gamma(1), delta(1), epsilon(1). F(0) has four main subunits: a(1), b(1), b'(1) and c(10-14). The alpha and beta chains form an alternating ring which encloses part of the gamma chain. F(1) is attached to F(0) by a central stalk formed by the gamma and epsilon chains, while a peripheral stalk is formed by the delta, b and b' chains.

It is found in the plastid. The protein resides in the chloroplast thylakoid membrane. In terms of biological role, f(1)F(0) ATP synthase produces ATP from ADP in the presence of a proton or sodium gradient. F-type ATPases consist of two structural domains, F(1) containing the extramembraneous catalytic core and F(0) containing the membrane proton channel, linked together by a central stalk and a peripheral stalk. During catalysis, ATP synthesis in the catalytic domain of F(1) is coupled via a rotary mechanism of the central stalk subunits to proton translocation. Functionally, key component of the F(0) channel; it plays a direct role in translocation across the membrane. A homomeric c-ring of between 10-14 subunits forms the central stalk rotor element with the F(1) delta and epsilon subunits. The chain is ATP synthase subunit c, chloroplastic from Cryptomeria japonica (Japanese cedar).